Consider the following 128-residue polypeptide: Head peptide (128 aa).

Positions 1–22 are cleaved as a signal peptide; sequence MWKFASIVVLVVCLAWAVYCED. At Gln23 the chain carries Pyrrolidone carboxylic acid. Pro26 is modified (hydroxyproline; partial). The segment at 27–128 is disordered; sequence SLKTRFGRSA…GRANKKRAAN (102 aa). Phe32 is modified (phenylalanine amide). Positions 35–55 are excised as a propeptide; that stretch reads SADEPESDNYVSNDIMEKRSA. Gln56 is subject to Pyrrolidone carboxylic acid. The residue at position 59 (Pro59) is a Hydroxyproline; partial. Phe65 bears the Phenylalanine amide mark. A compositionally biased stretch (basic and acidic residues) spans 66 to 78; that stretch reads GRSEGAEVMEKRS. Positions 68–79 are excised as a propeptide; that stretch reads SEGAEVMEKRSA. Gln80 is subject to Pyrrolidone carboxylic acid. A Hydroxyproline; partial modification is found at Pro83. The residue at position 89 (Phe89) is a Phenylalanine amide. Positions 92–128 are excised as a propeptide; it reads SVANPESDGYMRKRSAESEPFVTRIRHGRANKKRAAN. Over residues 115-128 the composition is skewed to basic residues; it reads RIRHGRANKKRAAN.

Belongs to the NPY family. Expressed in the brain, terminal ganglion, and midgut of adults: numerous neurosecretory cells and midgut endocrine cells. Expression is dynamic depending on reproductive cycle.

The protein resides in the secreted. Functionally, has a role in inhibiting host-seeking behavior during a reproductive cycle. In Aedes aegypti (Yellowfever mosquito), this protein is Head peptide.